We begin with the raw amino-acid sequence, 324 residues long: MDTLTRFLPEHLQQNQLPEALGGVLLSVVSACTEINAKVRLGALAGVLGMAGTGNIQGEDQKKLDVIANNIMIDTLKANSAVAGLASEEEDTFVNAGENGRYLVLFDPLDGSSNIDVNISVGTIFSILEKPEGALATESFLQTGRQQLAAGYVLYGPQTQLVFTFGHGVYMFTLNAENEFVLTKENPKVPESTKEFAINMSNRRHWLPPVQQYIDELLAGETGTRGKNYNMRWVASMVAEIHRILMRGGVFMYPQDKRDPAKPGKLRLMYEANPMSLILEQAGASASNAYQAMLDIQPENLHQRVAVFMGSSEEVAYLDRLHAK.

4 residues coordinate Mg(2+): E88, D107, L109, and D110. Substrate is bound by residues 110-113 (DGSS), N199, and K265. E271 contacts Mg(2+).

The protein belongs to the FBPase class 1 family. As to quaternary structure, homotetramer. Requires Mg(2+) as cofactor.

The protein resides in the cytoplasm. It catalyses the reaction beta-D-fructose 1,6-bisphosphate + H2O = beta-D-fructose 6-phosphate + phosphate. It functions in the pathway carbohydrate biosynthesis; gluconeogenesis. The sequence is that of Fructose-1,6-bisphosphatase class 1 from Neisseria meningitidis serogroup B (strain ATCC BAA-335 / MC58).